The following is a 268-amino-acid chain: Ubiquinone biosynthesis protein COQ4 homolog, mitochondrial (268 aa).

His171, Asp172, His175, and Glu187 together coordinate Zn(2+).

Belongs to the COQ4 family. Component of a multi-subunit COQ enzyme complex. Zn(2+) serves as cofactor.

Its subcellular location is the mitochondrion inner membrane. The catalysed reaction is a 4-hydroxy-3-methoxy-5-(all-trans-polyprenyl)benzoate + H(+) = a 2-methoxy-6-(all-trans-polyprenyl)phenol + CO2. It participates in cofactor biosynthesis; ubiquinone biosynthesis. Functionally, lyase that catalyzes the C1-decarboxylation of 4-hydroxy-3-methoxy-5-(all-trans-polyprenyl)benzoic acid into 2-methoxy-6-(all-trans-polyprenyl)phenol during ubiquinone biosynthesis. The polypeptide is Ubiquinone biosynthesis protein COQ4 homolog, mitochondrial (Drosophila erecta (Fruit fly)).